Consider the following 151-residue polypeptide: 6,7-dimethyl-8-ribityllumazine synthase (151 aa).

5-amino-6-(D-ribitylamino)uracil-binding positions include Phe23, 55–57, and 79–81; these read AYE and AVI. 84-85 lines the (2S)-2-hydroxy-3-oxobutyl phosphate pocket; that stretch reads AT. The active-site Proton donor is His87. Phe111 is a 5-amino-6-(D-ribitylamino)uracil binding site. Arg125 is a binding site for (2S)-2-hydroxy-3-oxobutyl phosphate.

It belongs to the DMRL synthase family.

The enzyme catalyses (2S)-2-hydroxy-3-oxobutyl phosphate + 5-amino-6-(D-ribitylamino)uracil = 6,7-dimethyl-8-(1-D-ribityl)lumazine + phosphate + 2 H2O + H(+). It participates in cofactor biosynthesis; riboflavin biosynthesis; riboflavin from 2-hydroxy-3-oxobutyl phosphate and 5-amino-6-(D-ribitylamino)uracil: step 1/2. Functionally, catalyzes the formation of 6,7-dimethyl-8-ribityllumazine by condensation of 5-amino-6-(D-ribitylamino)uracil with 3,4-dihydroxy-2-butanone 4-phosphate. This is the penultimate step in the biosynthesis of riboflavin. This chain is 6,7-dimethyl-8-ribityllumazine synthase, found in Leptospira interrogans serogroup Icterohaemorrhagiae serovar copenhageni (strain Fiocruz L1-130).